A 706-amino-acid polypeptide reads, in one-letter code: Fatty acid oxidation complex subunit alpha (706 aa).

An enoyl-CoA hydratase region spans residues 1 to 188 (MEKTFNLTRR…KMGLVNDVVP (188 aa)). Residues 308–706 (RKVKKAVILG…TMAQENAHFF (399 aa)) form a 3-hydroxyacyl-CoA dehydrogenase region.

In the N-terminal section; belongs to the enoyl-CoA hydratase/isomerase family. This sequence in the central section; belongs to the 3-hydroxyacyl-CoA dehydrogenase family. As to quaternary structure, heterotetramer of two alpha chains (FadJ) and two beta chains (FadI).

It localises to the cytoplasm. The enzyme catalyses a (3S)-3-hydroxyacyl-CoA = a (2E)-enoyl-CoA + H2O. It catalyses the reaction a 4-saturated-(3S)-3-hydroxyacyl-CoA = a (3E)-enoyl-CoA + H2O. It carries out the reaction a (3S)-3-hydroxyacyl-CoA + NAD(+) = a 3-oxoacyl-CoA + NADH + H(+). The catalysed reaction is (3S)-3-hydroxybutanoyl-CoA = (3R)-3-hydroxybutanoyl-CoA. It functions in the pathway lipid metabolism; fatty acid beta-oxidation. Catalyzes the formation of a hydroxyacyl-CoA by addition of water on enoyl-CoA. Also exhibits 3-hydroxyacyl-CoA epimerase and 3-hydroxyacyl-CoA dehydrogenase activities. The protein is Fatty acid oxidation complex subunit alpha of Shewanella baltica (strain OS155 / ATCC BAA-1091).